The following is a 789-amino-acid chain: Spermatogenesis-associated protein 20 (789 aa).

Basic residues predominate over residues 1-19 (MSHHSPPPPKHKGEHKGHG). Residues 1 to 65 (MSHHSPPPPK…CPPPAPQKTA (65 aa)) form a disordered region. Residues serine 5 and serine 652 each carry the phosphoserine modification.

Testis-specific and age-dependent (at protein level). Highly expressed. Expressed in round spermatids located in the inner half-layer of the seminiferous epithelium as well as in early elongated spermatids having cytoplasmic protrusions into the tubular lumen.

The protein resides in the secreted. Its function is as follows. May play a role in fertility regulation. The chain is Spermatogenesis-associated protein 20 (Spata20) from Rattus norvegicus (Rat).